Reading from the N-terminus, the 359-residue chain is Probable mannitol dehydrogenase (359 aa).

Zn(2+)-binding residues include Cys-48, His-70, Cys-101, Cys-104, Cys-107, Cys-115, and Cys-164.

It belongs to the zinc-containing alcohol dehydrogenase family. Zn(2+) is required as a cofactor.

The enzyme catalyses D-mannitol + NAD(+) = D-mannose + NADH + H(+). Oxidizes mannitol to mannose. Provides the initial step by which translocated mannitol is committed to central metabolism and, by regulating mannitol pool size, is important in regulating salt tolerance at the cellular level. This Fragaria ananassa (Strawberry) protein is Probable mannitol dehydrogenase (CAD).